The following is a 79-amino-acid chain: MSAQLQKIIADNSELIQEKSKKSDQDELGKRIDALLWEVDTLQKNIAETKEMCRRWGDERKREAAEFAKLLDSSDDDQN.

This is an uncharacterized protein from Caenorhabditis elegans.